A 310-amino-acid polypeptide reads, in one-letter code: MAVSVQDLLDKIHFHVIYSTETALQKEITTSEIMRPGLEMAGYFDYFTPERIQLFGMKEWSYMMTVVGDNRYDLLKKVMAKETPVVIVARNLEIPSEMVAAAKKADIVLLQSREATSRLNSVLTSFLDERLAERTTVHGVLMDIFGVGVLIQGASGIGKSETGLELVKRGHRLVADDRVDVFQRDAFTLSGEPAEILRNMIEIRGVGIIDVMSLFGAGAVKDSTDIDMAIYLEYYDKEKAFDRLGNAPTIVEFSDVEVPQTRIPVKTGRNVSVIVEAAVMNFRAKQMGFDATKTFEDRLTDLISHNKESQ.

Residues H138 and K159 contribute to the active site. 153–160 serves as a coordination point for ATP; it reads GASGIGKS. S160 provides a ligand contact to Mg(2+). Catalysis depends on D177, which acts as the Proton acceptor; for phosphorylation activity. Proton donor; for dephosphorylation activity. Residues 201–210 form an important for the catalytic mechanism of both phosphorylation and dephosphorylation region; sequence IEIRGVGIID. E202 is a Mg(2+) binding site. R243 is a catalytic residue. The interval 264–269 is important for the catalytic mechanism of dephosphorylation; the sequence is PVKTGR.

This sequence belongs to the HPrK/P family. In terms of assembly, homohexamer. It depends on Mg(2+) as a cofactor.

The enzyme catalyses [HPr protein]-L-serine + ATP = [HPr protein]-O-phospho-L-serine + ADP + H(+). The catalysed reaction is [HPr protein]-O-phospho-L-serine + phosphate + H(+) = [HPr protein]-L-serine + diphosphate. Catalyzes the ATP- as well as the pyrophosphate-dependent phosphorylation of a specific serine residue in HPr, a phosphocarrier protein of the phosphoenolpyruvate-dependent sugar phosphotransferase system (PTS). HprK/P also catalyzes the pyrophosphate-producing, inorganic phosphate-dependent dephosphorylation (phosphorolysis) of seryl-phosphorylated HPr (P-Ser-HPr). The two antagonistic activities of HprK/P are regulated by several intracellular metabolites, which change their concentration in response to the absence or presence of rapidly metabolisable carbon sources (glucose, fructose, etc.) in the growth medium. Therefore, by controlling the phosphorylation state of HPr, HPrK/P is a sensor enzyme that plays a major role in the regulation of carbon metabolism and sugar transport: it mediates carbon catabolite repression (CCR), and regulates PTS-catalyzed carbohydrate uptake and inducer exclusion. This Lactococcus lactis subsp. cremoris (strain MG1363) protein is HPr kinase/phosphorylase.